A 126-amino-acid chain; its full sequence is Large ribosomal subunit protein bL17 (126 aa).

It belongs to the bacterial ribosomal protein bL17 family. As to quaternary structure, part of the 50S ribosomal subunit. Contacts protein L32.

In Nitrosococcus oceani (strain ATCC 19707 / BCRC 17464 / JCM 30415 / NCIMB 11848 / C-107), this protein is Large ribosomal subunit protein bL17.